A 472-amino-acid chain; its full sequence is Uronate isomerase (472 aa).

The protein belongs to the metallo-dependent hydrolases superfamily. Uronate isomerase family.

It carries out the reaction D-glucuronate = D-fructuronate. It catalyses the reaction aldehydo-D-galacturonate = keto-D-tagaturonate. The protein operates within carbohydrate metabolism; pentose and glucuronate interconversion. The chain is Uronate isomerase from Xanthomonas oryzae pv. oryzae (strain MAFF 311018).